A 231-amino-acid polypeptide reads, in one-letter code: Large ribosomal subunit protein uL1 (231 aa).

The protein belongs to the universal ribosomal protein uL1 family. Part of the 50S ribosomal subunit.

Its function is as follows. Binds directly to 23S rRNA. The L1 stalk is quite mobile in the ribosome, and is involved in E site tRNA release. Protein L1 is also a translational repressor protein, it controls the translation of the L11 operon by binding to its mRNA. In Thioalkalivibrio sulfidiphilus (strain HL-EbGR7), this protein is Large ribosomal subunit protein uL1.